An 87-amino-acid chain; its full sequence is Selenoprotein W (87 aa).

Residues 10 to 13 (CGAU) constitute a cross-link (cysteinyl-selenocysteine (Cys-Sec); redox-active). Sec13 is a non-standard amino acid (selenocysteine). At Cys37 the chain carries S-glutathionyl cysteine.

Belongs to the SelWTH family. Selenoprotein W subfamily. Interacts with DPYSL2, PRDX1, YWHAB, YWHAG, HSP70 and HSP90.

It is found in the cytoplasm. Functionally, plays a role as a glutathione (GSH)-dependent antioxidant. May be involved in a redox-related process. May play a role in the myopathies of selenium deficiency. The protein is Selenoprotein W of Sus scrofa (Pig).